A 285-amino-acid polypeptide reads, in one-letter code: Probable endonuclease 4 (285 aa).

Residues His69, His109, Glu145, Asp179, His182, His216, Asp229, His231, and Glu261 each coordinate Zn(2+).

Belongs to the AP endonuclease 2 family. The cofactor is Zn(2+).

The enzyme catalyses Endonucleolytic cleavage to 5'-phosphooligonucleotide end-products.. In terms of biological role, endonuclease IV plays a role in DNA repair. It cleaves phosphodiester bonds at apurinic or apyrimidinic (AP) sites, generating a 3'-hydroxyl group and a 5'-terminal sugar phosphate. The sequence is that of Probable endonuclease 4 from Salmonella paratyphi A (strain AKU_12601).